The primary structure comprises 203 residues: Protein GrpE (203 aa).

Positions 1–20 (MSDNGDNNTKSPQHNNPQPN) are enriched in polar residues. Residues 1-46 (MSDNGDNNTKSPQHNNPQPNEKSDGKVQPGQPQVNPQRKFTAGINK) are disordered.

This sequence belongs to the GrpE family. As to quaternary structure, homodimer.

It localises to the cytoplasm. Functionally, participates actively in the response to hyperosmotic and heat shock by preventing the aggregation of stress-denatured proteins, in association with DnaK and GrpE. It is the nucleotide exchange factor for DnaK and may function as a thermosensor. Unfolded proteins bind initially to DnaJ; upon interaction with the DnaJ-bound protein, DnaK hydrolyzes its bound ATP, resulting in the formation of a stable complex. GrpE releases ADP from DnaK; ATP binding to DnaK triggers the release of the substrate protein, thus completing the reaction cycle. Several rounds of ATP-dependent interactions between DnaJ, DnaK and GrpE are required for fully efficient folding. The protein is Protein GrpE of Ehrlichia chaffeensis (strain ATCC CRL-10679 / Arkansas).